Here is a 989-residue protein sequence, read N- to C-terminus: Cation-chloride cotransporter 1 (989 aa).

Over residues 1-10 (MENGEIEGAA) the composition is skewed to acidic residues. The tract at residues 1–29 (MENGEIEGAADDGVPVPAPPNGRRYRPVG) is disordered. Topologically, residues 1–132 (MENGEIEGAA…GRPKETGPKF (132 aa)) are cytoplasmic. A helical transmembrane segment spans residues 133-153 (GTMMGVFVPCLQNILGIIYYI). The Extracellular segment spans residues 154-167 (RFTWIVGMAGVWQS). Residues 168-188 (LVLVSFCGACTFLTGISLSAI) traverse the membrane as a helical segment. The Cytoplasmic portion of the chain corresponds to 189 to 214 (ATNGAMKGGGPYYLIGRALGPEVGVS). Residues 215–235 (IGLCFFLGNAVAGSMYVLGAV) traverse the membrane as a helical segment. Residues 236-280 (ETFLDAVPSAGFFKESVTVVNNTLVNGTATASTATISTPSLHDLQ) are Extracellular-facing. N-linked (GlcNAc...) asparagine glycans are attached at residues Asn-256 and Asn-261. Residues 281 to 301 (VYGVIVTILLCFIVFGGVKII) traverse the membrane as a helical segment. Over 302–304 (NKV) the chain is Cytoplasmic. The helical transmembrane segment at 305 to 325 (APAFLIPVLFSLLCIYLGVFI) threads the bilayer. The Extracellular portion of the chain corresponds to 326 to 365 (APRHNAPKGITGLSITTFKDNWGSEYQRTNNAGVPDPNGS). Asn-363 carries an N-linked (GlcNAc...) asparagine glycan. Residues 366 to 386 (IYWDFNALVGLFFPAVTGIMA) traverse the membrane as a helical segment. At 387 to 405 (GSNRSASLKDTQRSIPIGT) the chain is on the cytoplasmic side. A helical membrane pass occupies residues 406–426 (LSATLTTTAMYLFSVLLFGAL). Residues 427-441 (ATREELLTDRLLTAT) are Extracellular-facing. Residues 442 to 462 (VAWPAPAVIYIGIILSTLGAA) traverse the membrane as a helical segment. At 463 to 498 (LQSLTGAPRLLAAIANDDILPVLNYFKVSEGAEPHS) the chain is on the cytoplasmic side. A helical transmembrane segment spans residues 499–519 (ATLFTAFICICCVVIGNLDLI). Topologically, residues 520–522 (TPT) are extracellular. The helical transmembrane segment at 523–543 (ITMFFLLCYAGVNLSCFLLDL) threads the bilayer. At 544–551 (LDAPSWRP) the chain is on the cytoplasmic side. Residues 552-572 (RWKFHHWSLSLVGALLCVVIM) traverse the membrane as a helical segment. Residues 573-578 (FLISWS) are Extracellular-facing. Residues 579–599 (FTVVSLALASLIYYYVSLKGK) form a helical membrane-spanning segment. Topologically, residues 600 to 989 (AGDWGDGFKS…YRRDVVTFFT (390 aa)) are cytoplasmic.

It belongs to the SLC12A transporter family. Expressed in roots, stems and leaves with higher expression in root and leaf tips.

It is found in the membrane. Its function is as follows. Probable cation/chloride cotransporter that may mediate potassium-chloride cotransport. Involved in plant development and K(+) and Cl(-) homeostasis. May not be involved in sodium-chloride cotransport. This is Cation-chloride cotransporter 1 (CCC1) from Oryza sativa subsp. japonica (Rice).